A 31-amino-acid chain; its full sequence is Nemertide alpha-2 (31 aa).

Intrachain disulfides connect cysteine 2–cysteine 16, cysteine 9–cysteine 20, and cysteine 15–cysteine 26. 4-hydroxyproline occurs at positions 28 and 29.

It belongs to the nemertide family. Confined to the epidermis and to the mucus layer.

It localises to the secreted. Its function is as follows. Toxin with similar potency against both insect and mammalian sodium channels (Nav). Delays the inactivation of most Nav channels tested (B.germanica (BgNav1); EC(50)=87.2 nM, human Nav1.1/SCN1A; EC(50)=125.8 nM, rat Nav1.2/SCN2A; EC(50)=97.9 nM, rat Nav1.3/SCN3A; EC(50)=127.7 nM, rat Nav1.4/SCN4A; EC(50)=1150.3 nM, human Nav1.5/SCN5A; EC(50)=149.2 nM, mouse Nav1.6/SCN8A; EC(50)=1361.8 nM, human Nav1.9/SCN9A; EC(50)=1296.7 nM). Inactivation is completely prevented by a concentration of 1 uM, resulting in sustained, non-inactivating current. In addition, the toxin significantly enhances the recovery from inactivation, and the open state is not required for the toxin to interact with the channel. In vivo, injection into brine shrimp (Artemia salina) stops movement or causes death after 24 hours (EC(50)=2.9 uM). The sequence is that of Nemertide alpha-2 from Lineus longissimus (Bootlace worm).